The chain runs to 122 residues: Small ribosomal subunit protein uS13 (122 aa).

The segment at 95 to 122 (GLPVRGQRTHTNARTRKGKAKPIAGKKK) is disordered.

Belongs to the universal ribosomal protein uS13 family. Part of the 30S ribosomal subunit. Forms a loose heterodimer with protein S19. Forms two bridges to the 50S subunit in the 70S ribosome.

Functionally, located at the top of the head of the 30S subunit, it contacts several helices of the 16S rRNA. In the 70S ribosome it contacts the 23S rRNA (bridge B1a) and protein L5 of the 50S subunit (bridge B1b), connecting the 2 subunits; these bridges are implicated in subunit movement. Contacts the tRNAs in the A and P-sites. In Zymomonas mobilis subsp. mobilis (strain ATCC 31821 / ZM4 / CP4), this protein is Small ribosomal subunit protein uS13.